The sequence spans 88 residues: Small ribosomal subunit protein bS20 (88 aa).

It belongs to the bacterial ribosomal protein bS20 family.

Its function is as follows. Binds directly to 16S ribosomal RNA. This Legionella pneumophila (strain Paris) protein is Small ribosomal subunit protein bS20.